The primary structure comprises 367 residues: Tetraprenyl-beta-curcumene synthase (367 aa).

Belongs to the large terpene synthase family.

It catalyses the reaction all-trans-heptaprenyl diphosphate = (R)-tetraprenyl-beta-curcumene + diphosphate. Its function is as follows. Catalyzes the transformation of a linear C35 prenyl diphosphate chain to form tetraprenyl-beta-curcumene. This is Tetraprenyl-beta-curcumene synthase (ytpB) from Bacillus subtilis (strain 168).